The primary structure comprises 721 residues: Transcription activator of gluconeogenesis ARB_05058 (721 aa).

Over residues 1–34 the composition is skewed to polar residues; the sequence is MSPHQTTGQESDNMTVNGENAQASSQYIQSNEEM. The interval 1–62 is disordered; it reads MSPHQTTGQE…PSRPKRKKAK (62 aa). Residues 40 to 55 show a composition bias toward basic and acidic residues; sequence TEKKASTAKAAKDPSR. The zn(2)-C6 fungal-type DNA-binding region spans 65–93; sequence CYACQRGHLTCGDERPCQRCIKRGFQDAC. 5 disordered regions span residues 128–224, 263–300, 353–400, 533–567, and 635–666; these read QNNA…FNSA, GDTP…SNQA, SPAS…TPQL, NHNV…YNSS, and GLNG…QRRW. 4 stretches are compositionally biased toward polar residues: residues 133–213, 267–277, 287–300, and 361–379; these read GSNT…TPSA, PSESGAQRGSI, LTGS…SNQA, and MMTT…GAFN. 2 stretches are compositionally biased toward low complexity: residues 380–399 and 543–553; these read SRQN…STPQ and GLMTGSTSRGS. Over residues 640–661 the composition is skewed to polar residues; that stretch reads AASNETNELNGSLTNGATTNGR.

Belongs to the ERT1/acuK family.

The protein resides in the nucleus. Functionally, transcription factor which regulates nonfermentable carbon utilization. Activator of gluconeogenetic genes. This is Transcription activator of gluconeogenesis ARB_05058 from Arthroderma benhamiae (strain ATCC MYA-4681 / CBS 112371) (Trichophyton mentagrophytes).